The following is a 367-amino-acid chain: Alpha-2-HS-glycoprotein (367 aa).

An N-terminal signal peptide occupies residues 1–18 (MKSLVLLLCLAQLWGCHS). One can recognise a Cystatin fetuin-A-type 1 domain in the interval 27–133 (YRQPNCDDPE…KFSVVYAKCD (107 aa)). 6 cysteine pairs are disulfide-bonded: Cys32-Cys358, Cys89-Cys100, Cys114-Cys132, Cys146-Cys149, Cys208-Cys219, and Cys230-Cys247. Position 134 is a phosphoserine (Ser134). A phosphoserine; by FAM20C mark is found at Ser135 and Ser138. A Cystatin fetuin-A-type 2 domain is found at 144 to 255 (KVCQDCPLLA…TCMVFQTQPV (112 aa)). N-linked (GlcNAc...) (complex) asparagine glycans are attached at residues Asn156 and Asn176. Positions 255 to 298 (VSSQPQPEGANEAVPTPVVDPDAPPSPPLGAPGLPPAGSPPDSH) are disordered. Thr270 carries O-linked (GalNAc...) threonine glycosylation. Residues 276-293 (DAPPSPPLGAPGLPPAGS) are compositionally biased toward pro residues. Residues Ser280 and Ser293 are each glycosylated (O-linked (GalNAc...) serine). Residues 301–340 (LAAPPGHQLHRAHYDLRHTFMGVVSLGSPSGEVSHPRKTR) constitute a propeptide, connecting peptide. Position 319 is a phosphothreonine; by FAM20C (Thr319). Phosphoserine; by FAM20C occurs at positions 325, 328, and 330. Residues Thr339 and Thr341 are each glycosylated (O-linked (GalNAc...) threonine). Ser346 is a glycosylation site (O-linked (GalNAc...) serine).

It belongs to the fetuin family. In terms of assembly, alpha-2-HS glycoprotein derives from this precursor, when the connecting peptide is cleaved off. The two chains A and B are held together by a single disulfide bond. Post-translationally, phosphorylated by FAM20C in the extracellular medium. In terms of processing, O- and N-glycosylated. O-glycosylated with core 1 or possibly core 8 glycans. N-glycan at Asn-156: Hex5HexNAc4; N-glycan heterogeneity at Asn-176: Hex5HexNAc4 (major) and Hex6HexNAc5 (minor). As to expression, synthesized in liver and selectively concentrated in bone matrix. Secreted in plasma. It is also found in dentin in much higher quantities than other plasma proteins.

The protein localises to the secreted. Its function is as follows. Promotes endocytosis, possesses opsonic properties and influences the mineral phase of bone. Shows affinity for calcium and barium ions. The sequence is that of Alpha-2-HS-glycoprotein (AHSG) from Homo sapiens (Human).